The following is a 295-amino-acid chain: Ethanolamine ammonia-lyase small subunit (295 aa).

Residues V207, E228, and C258 each contribute to the adenosylcob(III)alamin site.

Belongs to the EutC family. In terms of assembly, the basic unit is a heterodimer which dimerizes to form tetramers. The heterotetramers trimerize; 6 large subunits form a core ring with 6 small subunits projecting outwards. It depends on adenosylcob(III)alamin as a cofactor.

It localises to the bacterial microcompartment. It carries out the reaction ethanolamine = acetaldehyde + NH4(+). Its pathway is amine and polyamine degradation; ethanolamine degradation. In terms of biological role, catalyzes the deamination of various vicinal amino-alcohols to oxo compounds. Allows this organism to utilize ethanolamine as the sole source of nitrogen and carbon in the presence of external vitamin B12. The polypeptide is Ethanolamine ammonia-lyase small subunit (Escherichia fergusonii (strain ATCC 35469 / DSM 13698 / CCUG 18766 / IAM 14443 / JCM 21226 / LMG 7866 / NBRC 102419 / NCTC 12128 / CDC 0568-73)).